A 388-amino-acid polypeptide reads, in one-letter code: Protein DJ-1 homolog D (388 aa).

2 consecutive PfpI endopeptidase domains span residues 5–190 and 198–383; these read RTVL…KALG and KRIL…ALLG. Catalysis depends on cysteine 120, which acts as the Nucleophile. Position 120 is a cysteine sulfenic acid (-SOH) (cysteine 120). Histidine 121 is an active-site residue. Cysteine 313 acts as the Nucleophile in catalysis. Cysteine 313 bears the Cysteine sulfinic acid (-SO2H) mark. Residue histidine 314 is part of the active site.

Belongs to the peptidase C56 family. In terms of assembly, homotrimer. In terms of processing, cys-120 and Cys-313 are oxidized to sulfinic acid.

The enzyme catalyses (R)-S-lactoylglutathione = methylglyoxal + glutathione. Functionally, possesses glyoxalase I activity. Catalyzes the conversion of hemimercaptal, formed from methylglyoxal and glutathione, to S-lactoylglutathione. May be involved in oxidative stress response. In Arabidopsis thaliana (Mouse-ear cress), this protein is Protein DJ-1 homolog D (DJ1D).